Consider the following 401-residue polypeptide: Phosphoglycerate kinase, cytosolic (401 aa).

The (2R)-3-phosphoglycerate site is built by A24, D25, N27, R41, S63, H64, G66, R67, R122, H154, and R155. Residue G200 coordinates ADP. G200 serves as a coordination point for CDP. Residues K202 and K206 each coordinate AMP. An ATP-binding site is contributed by K206. Residue G224 participates in ADP binding. G224 serves as a coordination point for CDP. G225 and G297 together coordinate AMP. Residues G225 and G297 each contribute to the ATP site. Positions 322 and 327 each coordinate CDP. F327 serves as a coordination point for ADP. Residue E328 participates in AMP binding. Residues E328, D359, and S360 each coordinate ATP. D359 is a Mg(2+) binding site.

It belongs to the phosphoglycerate kinase family. In terms of assembly, monomer. The cofactor is Mg(2+).

Its subcellular location is the cytoplasm. The enzyme catalyses (2R)-3-phosphoglycerate + ATP = (2R)-3-phospho-glyceroyl phosphate + ADP. Its pathway is carbohydrate degradation; glycolysis; pyruvate from D-glyceraldehyde 3-phosphate: step 2/5. The protein is Phosphoglycerate kinase, cytosolic of Triticum aestivum (Wheat).